Here is a 362-residue protein sequence, read N- to C-terminus: Phosphoserine aminotransferase (362 aa).

2 residues coordinate L-glutamate: Ser9 and Arg42. Pyridoxal 5'-phosphate is bound by residues 76-77 (GR), Trp102, Thr153, Asp174, and Gln197. Lys198 is modified (N6-(pyridoxal phosphate)lysine). Residue 239–240 (NT) coordinates pyridoxal 5'-phosphate.

Belongs to the class-V pyridoxal-phosphate-dependent aminotransferase family. SerC subfamily. In terms of assembly, homodimer. Pyridoxal 5'-phosphate serves as cofactor.

It is found in the cytoplasm. The enzyme catalyses O-phospho-L-serine + 2-oxoglutarate = 3-phosphooxypyruvate + L-glutamate. The catalysed reaction is 4-(phosphooxy)-L-threonine + 2-oxoglutarate = (R)-3-hydroxy-2-oxo-4-phosphooxybutanoate + L-glutamate. It functions in the pathway amino-acid biosynthesis; L-serine biosynthesis; L-serine from 3-phospho-D-glycerate: step 2/3. It participates in cofactor biosynthesis; pyridoxine 5'-phosphate biosynthesis; pyridoxine 5'-phosphate from D-erythrose 4-phosphate: step 3/5. Its function is as follows. Catalyzes the reversible conversion of 3-phosphohydroxypyruvate to phosphoserine and of 3-hydroxy-2-oxo-4-phosphonooxybutanoate to phosphohydroxythreonine. This chain is Phosphoserine aminotransferase, found in Escherichia coli O157:H7.